We begin with the raw amino-acid sequence, 272 residues long: Cell division protein FtsQ (272 aa).

Over 1-20 (MSSYAPREIPLDIRLMQGTS) the chain is Cytoplasmic. The helical transmembrane segment at 21-40 (RALFWLVALGCLFVAGHWLM) threads the bilayer. The Periplasmic segment spans residues 41–272 (QRNWWDIRAV…KTPQPAGRKD (232 aa)). The 70-residue stretch at 45 to 114 (WDIRAVRLQG…MQLAVTLQAQ (70 aa)) folds into the POTRA domain.

The protein belongs to the FtsQ/DivIB family. FtsQ subfamily. As to quaternary structure, part of a complex composed of FtsB, FtsL and FtsQ.

Its subcellular location is the cell inner membrane. Essential cell division protein. May link together the upstream cell division proteins, which are predominantly cytoplasmic, with the downstream cell division proteins, which are predominantly periplasmic. May control correct divisome assembly. In Thiomonas arsenitoxydans (strain DSM 22701 / CIP 110005 / 3As), this protein is Cell division protein FtsQ.